Reading from the N-terminus, the 772-residue chain is General transcription and DNA repair factor IIH helicase subunit XPD (772 aa).

The 277-residue stretch at 7-283 (DLPILFPYPR…QSDSKKLQDE (277 aa)) folds into the Helicase ATP-binding domain. An ATP-binding site is contributed by 42–49 (MPSGTGKT). Residues Cys115, Cys133, Cys154, and Cys189 each contribute to the [4Fe-4S] cluster site. The DEAH box signature appears at 233–236 (DEAH).

This sequence belongs to the helicase family. RAD3/XPD subfamily. In terms of assembly, component of the 7-subunit TFIIH core complex composed of XPB/ptr8, XPD/rad15, ssl1, tfb1, tfb2, tfb4 and tfb5, which is active in NER. The core complex associates with the 3-subunit CTD-kinase module TFIIK composed of mcs2/cyclin H, mcs6/cdk7 and pmh1/tfb3 to form the 10-subunit holoenzyme (holo-TFIIH) active in transcription. [4Fe-4S] cluster is required as a cofactor.

The protein localises to the nucleus. It catalyses the reaction Couples ATP hydrolysis with the unwinding of duplex DNA at the replication fork by translocating in the 5'-3' direction. This creates two antiparallel DNA single strands (ssDNA). The leading ssDNA polymer is the template for DNA polymerase III holoenzyme which synthesizes a continuous strand.. It carries out the reaction ATP + H2O = ADP + phosphate + H(+). In terms of biological role, ATP-dependent 5'-3' DNA helicase, component of the general transcription and DNA repair factor IIH (TFIIH) core complex, which is involved in general and transcription-coupled nucleotide excision repair (NER) of damaged DNA and, when complexed to TFIIK, in RNA transcription by RNA polymerase II. In NER, TFIIH acts by opening DNA around the lesion to allow the excision of the damaged oligonucleotide and its replacement by a new DNA fragment. The ATP-dependent helicase activity of XPD/rad15 is required for DNA opening. In transcription, TFIIH has an essential role in transcription initiation. When the pre-initiation complex (PIC) has been established, TFIIH is required for promoter opening and promoter escape. Phosphorylation of the C-terminal tail (CTD) of the largest subunit of RNA polymerase II by the kinase module TFIIK controls the initiation of transcription. XPD/rad15 acts by forming a bridge between TFIIK and the core-TFIIH complex. Involved in the maintenance of the fidelity of DNA replication. This is General transcription and DNA repair factor IIH helicase subunit XPD from Schizosaccharomyces pombe (strain 972 / ATCC 24843) (Fission yeast).